The primary structure comprises 221 residues: Large ribosomal subunit protein uL4 (221 aa).

Residues 44–102 (AARQGTHKVKRRGEVRGGGKKPYRQKGTGRARQGSTRAPQFAGGGVVHGPTPRDYSQRT) are disordered. Positions 61–72 (GGKKPYRQKGTG) are enriched in basic residues.

Belongs to the universal ribosomal protein uL4 family. As to quaternary structure, part of the 50S ribosomal subunit.

One of the primary rRNA binding proteins, this protein initially binds near the 5'-end of the 23S rRNA. It is important during the early stages of 50S assembly. It makes multiple contacts with different domains of the 23S rRNA in the assembled 50S subunit and ribosome. In terms of biological role, forms part of the polypeptide exit tunnel. The polypeptide is Large ribosomal subunit protein uL4 (Streptomyces avermitilis (strain ATCC 31267 / DSM 46492 / JCM 5070 / NBRC 14893 / NCIMB 12804 / NRRL 8165 / MA-4680)).